The following is a 176-amino-acid chain: MFEKDKWMSIGEIVAPQGLRGDLRIKPSSDFPERFTKPGKRWIQKTDELPTEIKLTKGKLIPGKSIYVLSIEGVSTRSSAEEIIGWKLVIPIDSRPMLSKDEYHYHDLIGLEARSGPSKALIGYVTDLIKGGNDLLEIELVEGKKVLVPFVKEIVPEIEIKEKWLLINPPPGLLEL.

The PRC barrel domain maps to 100 to 173; the sequence is KDEYHYHDLI…WLLINPPPGL (74 aa).

Belongs to the RimM family. As to quaternary structure, binds ribosomal protein uS19.

The protein resides in the cytoplasm. An accessory protein needed during the final step in the assembly of 30S ribosomal subunit, possibly for assembly of the head region. Essential for efficient processing of 16S rRNA. May be needed both before and after RbfA during the maturation of 16S rRNA. It has affinity for free ribosomal 30S subunits but not for 70S ribosomes. This is Ribosome maturation factor RimM from Prochlorococcus marinus (strain NATL1A).